The following is a 386-amino-acid chain: S-adenosylmethionine synthase (386 aa).

An ATP-binding site is contributed by His-16. Asp-18 serves as a coordination point for Mg(2+). Glu-44 is a K(+) binding site. L-methionine-binding residues include Glu-57 and Gln-100. Residues 100-110 (QSPDINQGVDR) form a flexible loop region. Residues 164-166 (DGK), 230-231 (KF), Asp-239, 245-246 (RK), Ala-262, and Lys-266 each bind ATP. An L-methionine-binding site is contributed by Asp-239. Lys-270 contacts L-methionine.

This sequence belongs to the AdoMet synthase family. In terms of assembly, homotetramer; dimer of dimers. It depends on Mg(2+) as a cofactor. The cofactor is K(+).

It is found in the cytoplasm. The enzyme catalyses L-methionine + ATP + H2O = S-adenosyl-L-methionine + phosphate + diphosphate. It functions in the pathway amino-acid biosynthesis; S-adenosyl-L-methionine biosynthesis; S-adenosyl-L-methionine from L-methionine: step 1/1. Functionally, catalyzes the formation of S-adenosylmethionine (AdoMet) from methionine and ATP. The overall synthetic reaction is composed of two sequential steps, AdoMet formation and the subsequent tripolyphosphate hydrolysis which occurs prior to release of AdoMet from the enzyme. This chain is S-adenosylmethionine synthase, found in Wolinella succinogenes (strain ATCC 29543 / DSM 1740 / CCUG 13145 / JCM 31913 / LMG 7466 / NCTC 11488 / FDC 602W) (Vibrio succinogenes).